The chain runs to 397 residues: Succinate--CoA ligase [ADP-forming] subunit beta (397 aa).

Residues 9-254 (KALLREFGVP…ESEEDAKEIE (246 aa)) enclose the ATP-grasp domain. Residues Lys46, 53–55 (GRG), Glu109, Ser112, and Glu117 contribute to the ATP site. Positions 209 and 223 each coordinate Mg(2+). Residues Asn274 and 331 to 333 (GIM) contribute to the substrate site.

This sequence belongs to the succinate/malate CoA ligase beta subunit family. Heterotetramer of two alpha and two beta subunits. The cofactor is Mg(2+).

It catalyses the reaction succinate + ATP + CoA = succinyl-CoA + ADP + phosphate. The catalysed reaction is GTP + succinate + CoA = succinyl-CoA + GDP + phosphate. It functions in the pathway carbohydrate metabolism; tricarboxylic acid cycle; succinate from succinyl-CoA (ligase route): step 1/1. Functionally, succinyl-CoA synthetase functions in the citric acid cycle (TCA), coupling the hydrolysis of succinyl-CoA to the synthesis of either ATP or GTP and thus represents the only step of substrate-level phosphorylation in the TCA. The beta subunit provides nucleotide specificity of the enzyme and binds the substrate succinate, while the binding sites for coenzyme A and phosphate are found in the alpha subunit. This chain is Succinate--CoA ligase [ADP-forming] subunit beta, found in Nitrobacter hamburgensis (strain DSM 10229 / NCIMB 13809 / X14).